The primary structure comprises 216 residues: Somatotropin (216 aa).

A signal peptide spans 1 to 26 (MATGSQTSWLLTFTLLCLPWPQEAGA). Histidine 45 contributes to the Zn(2+) binding site. An intrachain disulfide couples cysteine 78 to cysteine 189. Serine 131 is modified (phosphoserine). Residue glutamate 198 participates in Zn(2+) binding. The cysteines at positions 206 and 214 are disulfide-linked.

Belongs to the somatotropin/prolactin family.

The protein localises to the secreted. In terms of biological role, plays an important role in growth control. Its major role in stimulating body growth is to stimulate the liver and other tissues to secrete IGF1. It stimulates both the differentiation and proliferation of myoblasts. It also stimulates amino acid uptake and protein synthesis in muscle and other tissues. This Spalax ehrenbergi (Middle East blind mole rat) protein is Somatotropin (GH1).